A 198-amino-acid polypeptide reads, in one-letter code: Recombination protein RecR (198 aa).

The segment at Cys-56–Cys-71 adopts a C4-type zinc-finger fold. A Toprim domain is found at His-79–Pro-174.

This sequence belongs to the RecR family.

In terms of biological role, may play a role in DNA repair. It seems to be involved in an RecBC-independent recombinational process of DNA repair. It may act with RecF and RecO. This is Recombination protein RecR from Acinetobacter baylyi (strain ATCC 33305 / BD413 / ADP1).